The following is a 409-amino-acid chain: Isovaleryl-CoA dehydrogenase, mitochondrial (409 aa).

The transit peptide at 1–22 (MAAAQRWLPGILRRGDGLARRL) directs the protein to the mitochondrion. FAD-binding positions include 151-160 (LAMSEPNSGS) and 184-186 (WCT). Substrate is bound at residue serine 160. Residues 206 to 207 (SK), tyrosine 261, and 268 to 271 (DLER) contribute to the substrate site. The Proton acceptor role is filled by glutamate 270. FAD is bound by residues arginine 296, glutamine 307, and 364–368 (QCLGG). 391-392 (AG) lines the substrate pocket. 393–395 (TSE) serves as a coordination point for FAD.

The protein belongs to the acyl-CoA dehydrogenase family. As to quaternary structure, homodimer. FAD is required as a cofactor.

It localises to the mitochondrion. It carries out the reaction 3-methylbutanoyl-CoA + oxidized [electron-transfer flavoprotein] + H(+) = 3-methylbut-2-enoyl-CoA + reduced [electron-transfer flavoprotein]. Its pathway is amino-acid degradation; L-leucine degradation; (S)-3-hydroxy-3-methylglutaryl-CoA from 3-isovaleryl-CoA: step 1/3. This is Isovaleryl-CoA dehydrogenase, mitochondrial from Oryza sativa subsp. japonica (Rice).